A 138-amino-acid chain; its full sequence is Basic phospholipase A2 trimucrotoxin (138 aa).

The first 16 residues, 1–16 (MRTLWIVAVLLLGVEG), serve as a signal peptide directing secretion. Disulfide bonds link cysteine 42/cysteine 131, cysteine 44/cysteine 60, cysteine 59/cysteine 111, cysteine 65/cysteine 138, cysteine 66/cysteine 104, cysteine 73/cysteine 97, and cysteine 91/cysteine 102. Tyrosine 43, glycine 45, and glycine 47 together coordinate Ca(2+). Histidine 63 is an active-site residue. Aspartate 64 contributes to the Ca(2+) binding site. Aspartate 105 is an active-site residue.

The protein belongs to the phospholipase A2 family. Group II subfamily. D49 sub-subfamily. In terms of assembly, homodimer. Ca(2+) serves as cofactor. Expressed by the venom gland.

It is found in the secreted. The catalysed reaction is a 1,2-diacyl-sn-glycero-3-phosphocholine + H2O = a 1-acyl-sn-glycero-3-phosphocholine + a fatty acid + H(+). Snake venom phospholipase A2 (PLA2) that displays edema-inducing activities, as well as presynaptic neurotoxicity and low myotoxicity. PLA2 catalyzes the calcium-dependent hydrolysis of the 2-acyl groups in 3-sn-phosphoglycerides. The sequence is that of Basic phospholipase A2 trimucrotoxin from Protobothrops mucrosquamatus (Taiwan habu).